Reading from the N-terminus, the 274-residue chain is NH(3)-dependent NAD(+) synthetase (274 aa).

46-53 (GISGGQDS) serves as a coordination point for ATP. D52 contributes to the Mg(2+) binding site. R140 is a deamido-NAD(+) binding site. An ATP-binding site is contributed by T160. E165 contacts Mg(2+). Deamido-NAD(+) is bound by residues K173 and D180. ATP is bound by residues K189 and T211. Residue 260-261 (HK) participates in deamido-NAD(+) binding.

Belongs to the NAD synthetase family. In terms of assembly, homodimer.

The enzyme catalyses deamido-NAD(+) + NH4(+) + ATP = AMP + diphosphate + NAD(+) + H(+). Its pathway is cofactor biosynthesis; NAD(+) biosynthesis; NAD(+) from deamido-NAD(+) (ammonia route): step 1/1. Its function is as follows. Catalyzes the ATP-dependent amidation of deamido-NAD to form NAD. Uses ammonia as a nitrogen source. The polypeptide is NH(3)-dependent NAD(+) synthetase (Streptococcus pneumoniae (strain 70585)).